The primary structure comprises 212 residues: MRRLTAFGLALLLLASGVARGEPAVTLDPQQSQVFRAWFVRIAQEQLRQGPSPRWHQQDCAGLVRFAANEALKVHDGKWLRANGLSNRYLPPELALSPEQRRLAQNWQQGGGQVGPYVNAIKLVQFNSRLVGRDLNQARPGDLMFYDQGDDQHLMIWMGRSIAYHTGSSTPTDNGMRSVSLQQLMTWKDTRWIPDESNPNFIGIYRLAFLSQ.

An N-terminal signal peptide occupies residues 1 to 21 (MRRLTAFGLALLLLASGVARG).

The protein to E.coli YfaT and T.maritima TM0986.

This is an uncharacterized protein from Pseudomonas aeruginosa (strain ATCC 15692 / DSM 22644 / CIP 104116 / JCM 14847 / LMG 12228 / 1C / PRS 101 / PAO1).